We begin with the raw amino-acid sequence, 736 residues long: 1,4-alpha-glucan branching enzyme GlgB (736 aa).

Residue D415 is the Nucleophile of the active site. The Proton donor role is filled by E468.

It belongs to the glycosyl hydrolase 13 family. GlgB subfamily. As to quaternary structure, monomer.

The catalysed reaction is Transfers a segment of a (1-&gt;4)-alpha-D-glucan chain to a primary hydroxy group in a similar glucan chain.. It functions in the pathway glycan biosynthesis; glycogen biosynthesis. Functionally, catalyzes the formation of the alpha-1,6-glucosidic linkages in glycogen by scission of a 1,4-alpha-linked oligosaccharide from growing alpha-1,4-glucan chains and the subsequent attachment of the oligosaccharide to the alpha-1,6 position. In Rhodopirellula baltica (strain DSM 10527 / NCIMB 13988 / SH1), this protein is 1,4-alpha-glucan branching enzyme GlgB.